The chain runs to 220 residues: MPPRPQRLAPVADLPPVFAGIDEAGRGCLAGPVVAAAVILPQEYALPGLTDSKKLTAARRESLAEGIRSCAVTWGIGVVWPRDIDRINILQATFRAMARAVRVLRQPPPAILIDGDKTLPPHVLTSLSCDGHLPTQRAIIGGDGCIPAISAASILAKTFRDRLMDTLDRRYHGYGFAKHKGYGTAEHLAAIAAHGPCAQHRLTFRGVRPNPAAEEQLTLW.

The RNase H type-2 domain maps to 16 to 216 (PVFAGIDEAG…VRPNPAAEEQ (201 aa)). 3 residues coordinate a divalent metal cation: Asp22, Glu23, and Asp114.

The protein belongs to the RNase HII family. It depends on Mn(2+) as a cofactor. Requires Mg(2+) as cofactor.

Its subcellular location is the cytoplasm. The catalysed reaction is Endonucleolytic cleavage to 5'-phosphomonoester.. Endonuclease that specifically degrades the RNA of RNA-DNA hybrids. The protein is Ribonuclease HII of Nitratidesulfovibrio vulgaris (strain ATCC 29579 / DSM 644 / CCUG 34227 / NCIMB 8303 / VKM B-1760 / Hildenborough) (Desulfovibrio vulgaris).